The primary structure comprises 140 residues: Profilin (140 aa).

At Ser-2 the chain carries N-acetylserine.

Belongs to the profilin family. As to quaternary structure, occurs in many kinds of cells as a complex with monomeric actin in a 1:1 ratio.

Its subcellular location is the cytoplasm. The protein resides in the cytoskeleton. In terms of biological role, binds to actin and affects the structure of the cytoskeleton. At high concentrations, profilin prevents the polymerization of actin, whereas it enhances it at low concentrations. By binding to PIP2, it inhibits the formation of IP3 and DG. This chain is Profilin, found in Clypeaster japonicus (Sand dollar).